A 644-amino-acid polypeptide reads, in one-letter code: Probable lysophospholipase 2 (644 aa).

The N-terminal stretch at 1 to 19 (MYFQSFYFLALLLATAVYG) is a signal peptide. N-linked (GlcNAc...) asparagine glycans are attached at residues asparagine 44, asparagine 96, asparagine 141, asparagine 178, asparagine 221, asparagine 245, asparagine 253, asparagine 281, asparagine 286, asparagine 316, asparagine 319, asparagine 373, asparagine 393, asparagine 449, asparagine 501, asparagine 558, asparagine 579, and asparagine 596. Positions 53–600 (SCDSSEIMVN…SQYCWNGTVD (548 aa)) constitute a PLA2c domain.

Belongs to the lysophospholipase family.

The protein localises to the secreted. It catalyses the reaction a 1-acyl-sn-glycero-3-phosphocholine + H2O = sn-glycerol 3-phosphocholine + a fatty acid + H(+). In terms of biological role, catalyzes the release of fatty acids from lysophospholipids. The sequence is that of Probable lysophospholipase 2 (plb2) from Schizosaccharomyces pombe (strain 972 / ATCC 24843) (Fission yeast).